The chain runs to 1488 residues: Chromosome partition protein MukB (1488 aa).

Residue 34–41 (GGNGAGKS) coordinates ATP. Coiled-coil stretches lie at residues 326 to 413 (LEAD…QTRA), 444 to 472 (LDTFQAKEQEATEKLLSLEQKMSVAQTAH), and 509 to 602 (RHLA…RRAP). Residues 666–783 (PGGAEDQRLN…SLPIFGRAAR (118 aa)) form a flexible hinge region. 3 coiled-coil regions span residues 835–923 (EAEI…AKLE), 977–1116 (EMLS…AKAG), and 1209–1265 (VEAI…LQSV).

Belongs to the SMC family. MukB subfamily. Homodimerization via its hinge domain. Binds to DNA via its C-terminal region. Interacts, and probably forms a ternary complex, with MukE and MukF via its C-terminal region. The complex formation is stimulated by calcium or magnesium. Interacts with tubulin-related protein FtsZ.

The protein resides in the cytoplasm. It is found in the nucleoid. In terms of biological role, plays a central role in chromosome condensation, segregation and cell cycle progression. Functions as a homodimer, which is essential for chromosome partition. Involved in negative DNA supercoiling in vivo, and by this means organize and compact chromosomes. May achieve or facilitate chromosome segregation by condensation DNA from both sides of a centrally located replisome during cell division. This Salmonella paratyphi C (strain RKS4594) protein is Chromosome partition protein MukB.